Reading from the N-terminus, the 966-residue chain is Translation initiation factor IF-2 (966 aa).

Basic and acidic residues-rich tracts occupy residues 99-113 (KRDEAGADQHNEAAD), 123-183 (EQAR…KAEE), 197-212 (DASRKKAEDEQARVAV), 220-249 (AADDAKAAADKARAEQDAARKRREAAEAEA), and 266-277 (PSERKAEEKKAE). The disordered stretch occupies residues 99-382 (KRDEAGADQH…NFQAPTEPVV (284 aa)). The span at 304 to 315 (AATTTTTTATTT) shows a compositional bias: low complexity. Positions 346-359 (SSGGVGGWRGGPRG) are enriched in gly residues. In terms of domain architecture, tr-type G spans 466–635 (PRPPVVTVMG…LLQAEVLELK (170 aa)). The segment at 475-482 (GHVDHGKT) is G1. 475–482 (GHVDHGKT) is a GTP binding site. The tract at residues 500–504 (GITQH) is G2. Positions 521 to 524 (DTPG) are G3. Residues 521–525 (DTPGH) and 575–578 (NKID) each bind GTP. The interval 575–578 (NKID) is G4. A G5 region spans residues 611–613 (SAK).

It belongs to the TRAFAC class translation factor GTPase superfamily. Classic translation factor GTPase family. IF-2 subfamily.

The protein localises to the cytoplasm. Functionally, one of the essential components for the initiation of protein synthesis. Protects formylmethionyl-tRNA from spontaneous hydrolysis and promotes its binding to the 30S ribosomal subunits. Also involved in the hydrolysis of GTP during the formation of the 70S ribosomal complex. The sequence is that of Translation initiation factor IF-2 from Cupriavidus pinatubonensis (strain JMP 134 / LMG 1197) (Cupriavidus necator (strain JMP 134)).